Here is a 192-residue protein sequence, read N- to C-terminus: MLKAGVIAVQGDVAEHADAIRRAADRHGEDCTVESIRSAGVVPECDLLLLPGGESTTISRLLAEEGIDEEIEAFAAAGKPLLATCAGLIVASRDAKDDRVSTLDILDVSVDRNAFGRQKDSFEAAIDVEGLDEPFPAVFIRAPLIDEVDAAVETLAAVDDRPVAVRQDNVVGTSFHPELTDDSRIHGLAFFS.

L-glutamine is bound at residue 53 to 55; it reads GES. Cys-85 functions as the Nucleophile in the catalytic mechanism. L-glutamine is bound by residues Arg-112 and 140-141; that span reads IR. Residues His-176 and Glu-178 each act as charge relay system in the active site.

Belongs to the glutaminase PdxT/SNO family. In terms of assembly, in the presence of PdxS, forms a dodecamer of heterodimers. Only shows activity in the heterodimer.

The catalysed reaction is aldehydo-D-ribose 5-phosphate + D-glyceraldehyde 3-phosphate + L-glutamine = pyridoxal 5'-phosphate + L-glutamate + phosphate + 3 H2O + H(+). It carries out the reaction L-glutamine + H2O = L-glutamate + NH4(+). It participates in cofactor biosynthesis; pyridoxal 5'-phosphate biosynthesis. Catalyzes the hydrolysis of glutamine to glutamate and ammonia as part of the biosynthesis of pyridoxal 5'-phosphate. The resulting ammonia molecule is channeled to the active site of PdxS. This chain is Pyridoxal 5'-phosphate synthase subunit PdxT, found in Natronomonas pharaonis (strain ATCC 35678 / DSM 2160 / CIP 103997 / JCM 8858 / NBRC 14720 / NCIMB 2260 / Gabara) (Halobacterium pharaonis).